A 143-amino-acid chain; its full sequence is Large ribosomal subunit protein uL11 (143 aa).

It belongs to the universal ribosomal protein uL11 family. As to quaternary structure, part of the ribosomal stalk of the 50S ribosomal subunit. Interacts with L10 and the large rRNA to form the base of the stalk. L10 forms an elongated spine to which L12 dimers bind in a sequential fashion forming a multimeric L10(L12)X complex. Post-translationally, one or more lysine residues are methylated.

Functionally, forms part of the ribosomal stalk which helps the ribosome interact with GTP-bound translation factors. The polypeptide is Large ribosomal subunit protein uL11 (Ralstonia pickettii (strain 12J)).